The sequence spans 530 residues: ATP synthase subunit alpha (530 aa).

G169–T176 contacts ATP.

The protein belongs to the ATPase alpha/beta chains family. As to quaternary structure, F-type ATPases have 2 components, CF(1) - the catalytic core - and CF(0) - the membrane proton channel. CF(1) has five subunits: alpha(3), beta(3), gamma(1), delta(1), epsilon(1). CF(0) has three main subunits: a(1), b(2) and c(9-12). The alpha and beta chains form an alternating ring which encloses part of the gamma chain. CF(1) is attached to CF(0) by a central stalk formed by the gamma and epsilon chains, while a peripheral stalk is formed by the delta and b chains.

It is found in the cell membrane. It catalyses the reaction ATP + H2O + 4 H(+)(in) = ADP + phosphate + 5 H(+)(out). In terms of biological role, produces ATP from ADP in the presence of a proton gradient across the membrane. The alpha chain is a regulatory subunit. In Mycoplasmopsis synoviae (strain 53) (Mycoplasma synoviae), this protein is ATP synthase subunit alpha.